An 86-amino-acid polypeptide reads, in one-letter code: Small ribosomal subunit protein bS18 (86 aa).

The tract at residues Met-1–Arg-20 is disordered.

This sequence belongs to the bacterial ribosomal protein bS18 family. As to quaternary structure, part of the 30S ribosomal subunit. Forms a tight heterodimer with protein bS6.

In terms of biological role, binds as a heterodimer with protein bS6 to the central domain of the 16S rRNA, where it helps stabilize the platform of the 30S subunit. In Clostridium beijerinckii (strain ATCC 51743 / NCIMB 8052) (Clostridium acetobutylicum), this protein is Small ribosomal subunit protein bS18.